Reading from the N-terminus, the 58-residue chain is uncharacterized protein (58 aa).

Its subcellular location is the mitochondrion. This is an uncharacterized protein from Saccharomyces cerevisiae (strain ATCC 204508 / S288c) (Baker's yeast).